Consider the following 244-residue polypeptide: Protein crossbronx (244 aa).

In terms of domain architecture, UBC core spans 20–176 (QQEYKILAEY…VLENIKESKE (157 aa)).

This sequence belongs to the ubiquitin-conjugating enzyme family. FTS subfamily.

The chain is Protein crossbronx (cbx) from Drosophila persimilis (Fruit fly).